The following is a 721-amino-acid chain: Oviduct-specific glycoprotein (721 aa).

The N-terminal stretch at 1 to 21 (MGRLLLLAGLVLLMKHSDGTA) is a signal peptide. The GH18 domain occupies 22-385 (YKLVCYFTNW…HILNELLVQT (364 aa)). A disulfide bridge links cysteine 26 with cysteine 51. Chitin is bound by residues 71–72 (LQ), 98–101 (GGWN), tyrosine 142, 211–214 (LSYD), and tryptophan 355. N-linked (GlcNAc...) asparagine glycans are attached at residues asparagine 402 and asparagine 442. A compositionally biased stretch (polar residues) spans 444–456 (TTVPSDGSVTPGG). Residues 444 to 465 (TTVPSDGSVTPGGTASPRKHAV) form a disordered region. N-linked (GlcNAc...) asparagine glycosylation occurs at asparagine 469. 21 repeat units span residues 486-492 (SKTTTGV), 493-499 (SKTTTGI), 500-506 (SKTTTGV), 507-513 (SKTTTGV), 514-520 (SKATAGI), 521-527 (SKTIPEI), 528-534 (SKATAGV), 535-541 (SKTTTGV), 542-548 (SKTTTGI), 549-555 (SKTITGV), 556-562 (SKTTTGI), 563-569 (SKTTTGI), 570-576 (SKTTTGV), 577-583 (SKITTGV), 584-590 (SKTTTGI), 591-597 (SKTTTGI), 598-604 (SQTTTGI), 605-611 (SKTTTDI), 612-618 (SKTTTGI), 619-625 (SKTTPGI), and 626-632 (SKTTPGM). A 21 X 7 AA tandem repeats of S-K-[TAI]-[TI]-[TAP]-[GED]-[IVM] region spans residues 486-632 (SKTTTGVSKT…PGISKTTPGM (147 aa)).

It belongs to the glycosyl hydrolase 18 family. In terms of tissue distribution, epithelial cells of the oviduct.

Its subcellular location is the cytoplasmic vesicle. It localises to the secretory vesicle. Its function is as follows. Binds to oocyte zona pellucida in vivo. May play a role in the fertilization process and/or early embryonic development. This chain is Oviduct-specific glycoprotein (Ovgp1), found in Mus musculus (Mouse).